The sequence spans 334 residues: Holliday junction branch migration complex subunit RuvB (334 aa).

The large ATPase domain (RuvB-L) stretch occupies residues 1 to 182 (MNERMVDQSM…FGVHLRLEYY (182 aa)). Residues leucine 21, arginine 22, glycine 63, lysine 66, threonine 67, threonine 68, 129–131 (EDF), arginine 172, tyrosine 182, and arginine 219 contribute to the ATP site. Threonine 67 is a Mg(2+) binding site. A small ATPAse domain (RuvB-S) region spans residues 183–253 (NESDLKEIII…TTKHALGLLQ (71 aa)). The segment at 256 to 334 (QHGLDYIDHK…HFAKSNEERE (79 aa)) is head domain (RuvB-H). Residues arginine 292, arginine 311, and arginine 316 each coordinate DNA.

Belongs to the RuvB family. As to quaternary structure, homohexamer. Forms an RuvA(8)-RuvB(12)-Holliday junction (HJ) complex. HJ DNA is sandwiched between 2 RuvA tetramers; dsDNA enters through RuvA and exits via RuvB. An RuvB hexamer assembles on each DNA strand where it exits the tetramer. Each RuvB hexamer is contacted by two RuvA subunits (via domain III) on 2 adjacent RuvB subunits; this complex drives branch migration. In the full resolvosome a probable DNA-RuvA(4)-RuvB(12)-RuvC(2) complex forms which resolves the HJ.

It is found in the cytoplasm. It carries out the reaction ATP + H2O = ADP + phosphate + H(+). The RuvA-RuvB-RuvC complex processes Holliday junction (HJ) DNA during genetic recombination and DNA repair, while the RuvA-RuvB complex plays an important role in the rescue of blocked DNA replication forks via replication fork reversal (RFR). RuvA specifically binds to HJ cruciform DNA, conferring on it an open structure. The RuvB hexamer acts as an ATP-dependent pump, pulling dsDNA into and through the RuvAB complex. RuvB forms 2 homohexamers on either side of HJ DNA bound by 1 or 2 RuvA tetramers; 4 subunits per hexamer contact DNA at a time. Coordinated motions by a converter formed by DNA-disengaged RuvB subunits stimulates ATP hydrolysis and nucleotide exchange. Immobilization of the converter enables RuvB to convert the ATP-contained energy into a lever motion, pulling 2 nucleotides of DNA out of the RuvA tetramer per ATP hydrolyzed, thus driving DNA branch migration. The RuvB motors rotate together with the DNA substrate, which together with the progressing nucleotide cycle form the mechanistic basis for DNA recombination by continuous HJ branch migration. Branch migration allows RuvC to scan DNA until it finds its consensus sequence, where it cleaves and resolves cruciform DNA. The protein is Holliday junction branch migration complex subunit RuvB of Staphylococcus aureus (strain MRSA252).